The following is a 358-amino-acid chain: Aromatic amino acid aminotransferase (358 aa).

Lys-214 carries the N6-(pyridoxal phosphate)lysine modification.

Belongs to the class-II pyridoxal-phosphate-dependent aminotransferase family. As to quaternary structure, homodimer. The cofactor is pyridoxal 5'-phosphate.

The enzyme catalyses an aromatic L-alpha-amino acid + 2-oxoglutarate = an aromatic oxo-acid + L-glutamate. In terms of biological role, aminotransferase that catalyzes the conversion of aromatic amino acids and 2-oxoglutarate into corresponding aromatic oxo acids and L-glutamate. This is Aromatic amino acid aminotransferase from Rhodococcus erythropolis (strain PR4 / NBRC 100887).